Reading from the N-terminus, the 181-residue chain is Putative manganese efflux pump MntP (181 aa).

6 helical membrane-spanning segments follow: residues leucine 3–alanine 23, isoleucine 42–isoleucine 62, serine 63–lysine 83, leucine 101–phenylalanine 121, isoleucine 124–alanine 144, and leucine 160–isoleucine 180.

This sequence belongs to the MntP (TC 9.B.29) family.

Its subcellular location is the cell inner membrane. Its function is as follows. Probably functions as a manganese efflux pump. The chain is Putative manganese efflux pump MntP from Campylobacter fetus subsp. fetus (strain 82-40).